A 50-amino-acid polypeptide reads, in one-letter code: Ribosome-inactivating protein lyophyllin (50 aa).

The catalysed reaction is Endohydrolysis of the N-glycosidic bond at one specific adenosine on the 28S rRNA.. Functionally, N-glycosylase that inhibits protein synthesis by depurinating ribosomal rRNA, and thus acts as a ribosomal inactivating protein (RIP). Has adenine polynucleotide glycosidase activity on the poly(A) substrate A30-ssDNA. Inhibits cell-free translation in rabbit reticulocyte lysate system with an IC(50) of 1 nM. May function in the defense response to pathogens. Displays antifungal activity against C.comatus and P.piricola, but not against R.solani, M.arachidicola and C.gossypii. Inhibits mycelial growth in P.piricola with an IC(50) of 2.5 uM. Has cytotoxic activity against the human cancer cell lines Hela, HepG2, and JAR, with IC(50) of 358.8, 489.8, and 926.9 nM respectively. It also inhibits HIV-1 reverse transcriptase activity (IC(50)=7.9 nM) and disrupts mouse embryonic development. This is Ribosome-inactivating protein lyophyllin from Lyophyllum shimeji (Hon-shimeji).